A 387-amino-acid chain; its full sequence is Ferrochelatase (387 aa).

Residues His196 and Glu277 each contribute to the Fe cation site.

It belongs to the ferrochelatase family.

The protein localises to the cytoplasm. It carries out the reaction heme b + 2 H(+) = protoporphyrin IX + Fe(2+). It functions in the pathway porphyrin-containing compound metabolism; protoheme biosynthesis; protoheme from protoporphyrin-IX: step 1/1. Functionally, catalyzes the ferrous insertion into protoporphyrin IX. The protein is Ferrochelatase of Rippkaea orientalis (strain PCC 8801 / RF-1) (Cyanothece sp. (strain PCC 8801)).